Reading from the N-terminus, the 240-residue chain is Fibronectin type III domain-containing protein 5 (240 aa).

Positions 1–10 (MQAARGGAGR) are enriched in gly residues. Positions 1–33 (MQAARGGAGRPGREGRGLERECERSPGPGVAMP) are disordered. A compositionally biased stretch (basic and acidic residues) spans 11-24 (PGREGRGLERECER). A Fibronectin type-III domain is found at 64 to 155 (APVNVTVRHL…EPVLFKTPRE (92 aa)). N-linked (GlcNAc...) asparagine glycans are attached at residues N67 and N112. The chain crosses the membrane as a helical span at residues 181–201 (GEVLIIVVVLFMWAGVIALFC). Over residues 210 to 221 (NEPNNNKEKTKS) the composition is skewed to basic and acidic residues. The disordered stretch occupies residues 210-240 (NEPNNNKEKTKSASETSTPEHQGGGLLRSKI). Gly residues predominate over residues 231-240 (QGGGLLRSKI). The Microbody targeting signal signature appears at 238 to 240 (SKI).

Dimer; may exist in other oligomeric forms. The extracellular domain is cleaved and released from the cell membrane. In terms of processing, N-Glycosylated. In adult, it is highly expressed in skeletal muscle, heart and brain.

The protein resides in the cell membrane. The protein localises to the peroxisome membrane. It localises to the secreted. In terms of biological role, mediates beneficial effects of muscular exercise. Induces browning of white adipose tissue by stimulating UCP1 expression, at least in part, via the nuclear receptor PPARA. This Mus musculus (Mouse) protein is Fibronectin type III domain-containing protein 5 (Fndc5).